Here is a 142-residue protein sequence, read N- to C-terminus: Class II hydrophobin 7 (142 aa).

A signal peptide spans 1–16; it reads MKFLTVAIVLAAAASA. 4 disulfide bridges follow: cysteine 73/cysteine 123, cysteine 84/cysteine 114, cysteine 85/cysteine 97, and cysteine 124/cysteine 135.

Belongs to the cerato-ulmin hydrophobin family. As to quaternary structure, homodimer. Homodimers further self-assemble to form highly ordered films at water-air interfaces through intermolecular interactions.

The protein localises to the secreted. The protein resides in the cell wall. Aerial growth, conidiation, and dispersal of filamentous fungi in the environment rely upon a capability of their secreting small amphipathic proteins called hydrophobins (HPBs) with low sequence identity. Class I can self-assemble into an outermost layer of rodlet bundles on aerial cell surfaces, conferring cellular hydrophobicity that supports fungal growth, development and dispersal; whereas Class II form highly ordered films at water-air interfaces through intermolecular interactions but contribute nothing to the rodlet structure. The protein is Class II hydrophobin 7 of Trichoderma asperellum (strain ATCC 204424 / CBS 433.97 / NBRC 101777).